The primary structure comprises 323 residues: Aldo-keto reductase family 1 member C1 (323 aa).

NADP(+) is bound by residues 20-24 and aspartate 50; that span reads GFGTY. Tyrosine 24 provides a ligand contact to substrate. Residue tyrosine 55 is the Proton donor of the active site. Histidine 117 serves as a coordination point for substrate. NADP(+) is bound by residues 166–167, glutamine 190, and 216–222; these read SN and YSALGSH. 2 residues coordinate substrate: histidine 222 and tryptophan 227. Residue 270-280 coordinates NADP(+); that stretch reads KSYNEQRIRQN.

The protein belongs to the aldo/keto reductase family. In terms of assembly, monomer. In terms of tissue distribution, expressed in all tissues tested including liver, prostate, testis, adrenal gland, brain, uterus, mammary gland and keratinocytes. Highest levels found in liver, mammary gland and brain.

It localises to the cytoplasm. It is found in the cytosol. It carries out the reaction a 3alpha-hydroxysteroid + NADP(+) = a 3-oxosteroid + NADPH + H(+). The enzyme catalyses a 3alpha-hydroxysteroid + NAD(+) = a 3-oxosteroid + NADH + H(+). The catalysed reaction is (17R,20S)-17,20-dihydroxypregn-4-en-3-one + NADP(+) = 17alpha-hydroxyprogesterone + NADPH + H(+). It catalyses the reaction (17R,20S)-17,20-dihydroxypregn-4-en-3-one + NAD(+) = 17alpha-hydroxyprogesterone + NADH + H(+). It carries out the reaction (20S)-hydroxypregn-4-en-3-one + NADP(+) = progesterone + NADPH + H(+). The enzyme catalyses (20S)-hydroxypregn-4-en-3-one + NAD(+) = progesterone + NADH + H(+). The catalysed reaction is (1R,2R)-1,2-dihydrobenzene-1,2-diol + NADP(+) = catechol + NADPH + H(+). It catalyses the reaction (S)-indan-1-ol + NAD(+) = indan-1-one + NADH + H(+). It carries out the reaction (S)-indan-1-ol + NADP(+) = indan-1-one + NADPH + H(+). The enzyme catalyses 5alpha-androstane-3alpha,17beta-diol + NADP(+) = 17beta-hydroxy-5alpha-androstan-3-one + NADPH + H(+). The catalysed reaction is 5alpha-androstane-3beta,17beta-diol + NADP(+) = 17beta-hydroxy-5alpha-androstan-3-one + NADPH + H(+). It catalyses the reaction 5alpha-androstane-3alpha,17beta-diol + NAD(+) = 17beta-hydroxy-5alpha-androstan-3-one + NADH + H(+). It carries out the reaction 17beta-hydroxy-5alpha-androstan-3-one + NADP(+) = 5alpha-androstan-3,17-dione + NADPH + H(+). The enzyme catalyses androsterone + NADP(+) = 5alpha-androstan-3,17-dione + NADPH + H(+). The catalysed reaction is androsterone + NADPH + H(+) = 5alpha-androstane-3alpha,17beta-diol + NADP(+). It catalyses the reaction 5alpha-androstane-3alpha,17beta-diol + NAD(+) = androsterone + NADH + H(+). It carries out the reaction 17beta-estradiol + NADP(+) = estrone + NADPH + H(+). The enzyme catalyses 17beta-estradiol + NAD(+) = estrone + NADH + H(+). The catalysed reaction is testosterone + NADP(+) = androst-4-ene-3,17-dione + NADPH + H(+). It catalyses the reaction 20alpha-hydroxy-5beta-pregnan-3-one + NADP(+) = 5beta-pregnan-3,20-dione + NADPH + H(+). It carries out the reaction 3beta-hydroxy-5beta-pregnane-20-one + NADP(+) = 5beta-pregnan-3,20-dione + NADPH + H(+). The enzyme catalyses 3beta-hydroxy-5beta-pregnane-20-one + NADPH + H(+) = 3beta,20alpha-dihydroxy-5beta-pregnane + NADP(+). The catalysed reaction is (3beta,5alpha,17beta)-3-hydroxyandrostan-17-yl sulfate + NADP(+) = 5alpha-dihydrotestosterone sulfate + NADPH + H(+). Its pathway is steroid metabolism. Inhibited by hexestrol with an IC(50) of 9.5 uM, 1,10-phenanthroline with an IC(50) of 55 uM, 1,7-phenanthroline with an IC(50) of 72 uM, flufenamic acid with an IC(50) of 6.0 uM, indomethacin with an IC(50) of 140 uM, ibuprofen with an IC(50) of 950 uM, lithocholic acid with an IC(50) of 25 uM, ursodeoxycholic acid with an IC(50) of 340 uM and chenodeoxycholic acid with an IC(50) of 570 uM. The oxidation reaction is inhibited by low micromolar concentrations of NADPH. In terms of biological role, cytosolic aldo-keto reductase that catalyzes the NADH and NADPH-dependent reduction of ketosteroids to hydroxysteroids. Most probably acts as a reductase in vivo since the oxidase activity measured in vitro is inhibited by physiological concentrations of NADPH. Displays a broad positional specificity acting on positions 3, 17 and 20 of steroids and regulates the metabolism of hormones like estrogens and androgens. May also reduce conjugated steroids such as 5alpha-dihydrotestosterone sulfate. Displays affinity for bile acids. This Homo sapiens (Human) protein is Aldo-keto reductase family 1 member C1 (AKR1C1).